The primary structure comprises 442 residues: ATP-dependent protease ATPase subunit HslU (442 aa).

ATP-binding positions include isoleucine 18 and 60 to 65 (GVGKTE). A disordered region spans residues 136–156 (LPKPKNDWDSTDSDANSNTRQ). Residues aspartate 255, glutamate 320, and arginine 392 each contribute to the ATP site.

It belongs to the ClpX chaperone family. HslU subfamily. In terms of assembly, a double ring-shaped homohexamer of HslV is capped on each side by a ring-shaped HslU homohexamer. The assembly of the HslU/HslV complex is dependent on binding of ATP.

The protein resides in the cytoplasm. Its function is as follows. ATPase subunit of a proteasome-like degradation complex; this subunit has chaperone activity. The binding of ATP and its subsequent hydrolysis by HslU are essential for unfolding of protein substrates subsequently hydrolyzed by HslV. HslU recognizes the N-terminal part of its protein substrates and unfolds these before they are guided to HslV for hydrolysis. The chain is ATP-dependent protease ATPase subunit HslU from Shewanella sp. (strain MR-7).